A 430-amino-acid polypeptide reads, in one-letter code: Enolase (430 aa).

The interval 1 to 140 (MPYIVDVYAR…YQYLGGFNSK (140 aa)) is sufficient for secretion. The residue at position 141 (Thr-141) is a Phosphothreonine. Residue Gln-163 participates in (2R)-2-phosphoglycerate binding. Residue Glu-205 is the Proton donor of the active site. Asp-242 contacts Mg(2+). A Phosphoserine modification is found at Ser-259. Tyr-281 is modified (phosphotyrosine). 2 residues coordinate Mg(2+): Glu-287 and Asp-314. Ser-325 carries the phosphoserine modification. Positions 339, 368, 369, and 390 each coordinate (2R)-2-phosphoglycerate. Lys-339 acts as the Proton acceptor in catalysis.

The protein belongs to the enolase family. Homooctamer. Component of the RNA degradosome complex composed of rny, rnjA, rnjB, pnp, pfkA and eno (although rnjA and rnjB's presence is controversial). It depends on Mg(2+) as a cofactor. Phosphorylated during sporulation.

The protein resides in the cytoplasm. It is found in the secreted. The protein localises to the cell surface. The enzyme catalyses (2R)-2-phosphoglycerate = phosphoenolpyruvate + H2O. Its pathway is carbohydrate degradation; glycolysis; pyruvate from D-glyceraldehyde 3-phosphate: step 4/5. Covalent binding to the substrate (probably 2-PG) at Lys-339 of a small fraction of enolase causes inactivation of the enzyme, and possibly serves as a signal for the export of the protein. Citrate acts as a non-competitive inhibitor for both forward and reverse reactions, probably by chelating Mg(2+). Catalyzes the reversible conversion of 2-phosphoglycerate (2-PG) into phosphoenolpyruvate (PEP). It is essential for the degradation of carbohydrates via glycolysis. In terms of biological role, a component of the RNA degradosome, a multi-enzyme complex involved in RNA processing and messenger RNA degradation. This chain is Enolase, found in Bacillus subtilis (strain 168).